Consider the following 314-residue polypeptide: Protein EXORDIUM (314 aa).

Positions 1 to 21 are cleaved as a signal peptide; that stretch reads MYLLVFKLFLFLSLLQISVSA.

It belongs to the EXORDIUM family. Expressed in root tips, vascular tissue of roots, shoot apex, rosette leaves and embryos.

The protein resides in the secreted. Its subcellular location is the extracellular space. It is found in the apoplast. Required for cell expansion in leaves. May mediate brassinosteroid (BR)-induced leaf growth. May play a role in the control of BR responses in roots. May be involved in signaling processes that coordinate BR responses with environmental or developmental signals. The protein is Protein EXORDIUM (EXO) of Arabidopsis thaliana (Mouse-ear cress).